The primary structure comprises 423 residues: AP-1 complex subunit mu-2 (423 aa).

Residues 168–421 form the MHD domain; that stretch reads KNEVFIDVIE…ITQSGDYQLR (254 aa).

The protein belongs to the adaptor complexes medium subunit family. Adaptor protein complex 1 (AP-1) is a heterotetramer composed of two large adaptins (gamma-type subunit AP1G1 and beta-type subunit AP1B1), a medium adaptin (mu-type subunit AP1M1 or AP1M2) and a small adaptin (sigma-type subunit AP1S1 or AP1S2 or AP1S3). Interacts with P2X4. Phosphorylation of membrane-bound AP1M1/AP1M2 increases its affinity for sorting signals.

The protein localises to the golgi apparatus. The protein resides in the cytoplasmic vesicle. Its subcellular location is the clathrin-coated vesicle membrane. In terms of biological role, subunit of clathrin-associated adaptor protein complex 1 that plays a role in protein sorting in the trans-Golgi network (TGN) and endosomes. The AP complexes mediate the recruitment of clathrin to membranes and the recognition of sorting signals within the cytosolic tails of transmembrane cargo molecules. This Rattus norvegicus (Rat) protein is AP-1 complex subunit mu-2 (Ap1m2).